A 338-amino-acid polypeptide reads, in one-letter code: MREPGFWHRPPSWLSRLLLPLGAVYGEITSWRMRKTGVEAGAPVICVGNYHLGGAGKTPTTLALVRLLRDLDEQPIVLSRGYGGRLKGPILVDPQRHDAADVGDEPLMMARRVPVVVARDRVDGAALARSQGASLLVMDDGFQNPALVKHLSLIVIDSRRGVGNGCVFPAGPLRAPLPLQIERTDALIIIGDGTAADEVAAAIATRGGVVLRARLRPDAASVERLKGQRVLAFAGIGDPARYFATLRASGIDVADQRAFADHHPFTVAELESLAETARREGLTLVTTEKDLARIGAAAATLGSAIVPFAVTLAVEDEPSLRLFLLEQINRARTKPRAG.

Position 51-58 (51-58 (HLGGAGKT)) interacts with ATP.

Belongs to the LpxK family.

The enzyme catalyses a lipid A disaccharide + ATP = a lipid IVA + ADP + H(+). It functions in the pathway glycolipid biosynthesis; lipid IV(A) biosynthesis; lipid IV(A) from (3R)-3-hydroxytetradecanoyl-[acyl-carrier-protein] and UDP-N-acetyl-alpha-D-glucosamine: step 6/6. Transfers the gamma-phosphate of ATP to the 4'-position of a tetraacyldisaccharide 1-phosphate intermediate (termed DS-1-P) to form tetraacyldisaccharide 1,4'-bis-phosphate (lipid IVA). The polypeptide is Tetraacyldisaccharide 4'-kinase (Rhodopseudomonas palustris (strain HaA2)).